Consider the following 1043-residue polypeptide: Integrator complex subunit 3 (1043 aa).

Met1 is subject to N-acetylmethionine. Phosphoserine is present on residues Ser502, Ser537, and Ser995. Residues 977–1043 are disordered; that stretch reads YEDSSTKPPK…GSSAVGSDSD (67 aa). Residues 1008-1022 are compositionally biased toward acidic residues; it reads AEEESGSSSASEEED.

Belongs to the Integrator subunit 3 family. As to quaternary structure, component of the Integrator complex, composed of core subunits INTS1, INTS2, INTS3, INTS4, INTS5, INTS6, INTS7, INTS8, INTS9/RC74, INTS10, INTS11/CPSF3L, INTS12, INTS13, INTS14 and INTS15. The core complex associates with protein phosphatase 2A subunits PPP2CA and PPP2R1A, to form the Integrator-PP2A (INTAC) complex. Component of the SOSS complex, composed of SOSS-B (SOSS-B1/NABP2 or SOSS-B2/NABP1), SOSS-A/INTS3 and SOSS-C/INIP. SOSS complexes containing SOSS-B1/NABP2 are more abundant than complexes containing SOSS-B2/NABP1. Interacts with SOSS-B1/NABP2, SOSS-B2/NABP1 and SOSS-C/INIP; the interaction is direct. Interacts with NBN/NBS1.

It localises to the nucleus. The protein resides in the cytoplasm. Component of the integrator complex, a multiprotein complex that terminates RNA polymerase II (Pol II) transcription in the promoter-proximal region of genes. The integrator complex provides a quality checkpoint during transcription elongation by driving premature transcription termination of transcripts that are unfavorably configured for transcriptional elongation: the complex terminates transcription by (1) catalyzing dephosphorylation of the C-terminal domain (CTD) of Pol II subunit POLR2A/RPB1 and SUPT5H/SPT5, (2) degrading the exiting nascent RNA transcript via endonuclease activity and (3) promoting the release of Pol II from bound DNA. The integrator complex is also involved in terminating the synthesis of non-coding Pol II transcripts, such as enhancer RNAs (eRNAs), small nuclear RNAs (snRNAs), telomerase RNAs and long non-coding RNAs (lncRNAs). Within the integrator complex, INTS3 is involved in the post-termination step: INTS3 binds INTS7 in the open conformation of integrator complex and prevents the rebinding of Pol II to the integrator after termination cycle. Mediates recruitment of cytoplasmic dynein to the nuclear envelope, probably as component of the integrator complex. Functionally, component of the SOSS complex, a multiprotein complex that functions downstream of the MRN complex to promote DNA repair and G2/M checkpoint. The SOSS complex associates with single-stranded DNA at DNA lesions and influences diverse endpoints in the cellular DNA damage response including cell-cycle checkpoint activation, recombinational repair and maintenance of genomic stability. The SOSS complex is required for efficient homologous recombination-dependent repair of double-strand breaks (DSBs) and ATM-dependent signaling pathways. In the SOSS complex, it is required for the assembly of the complex and for stabilization of the complex at DNA damage sites. This chain is Integrator complex subunit 3 (INTS3), found in Pongo abelii (Sumatran orangutan).